A 588-amino-acid chain; its full sequence is Mitochondrial tRNA methylthiotransferase CDK5RAP1 (588 aa).

Residues 1-30 constitute a mitochondrion transit peptide; it reads MHPLRCVLQVQRLSAPFTSMCWVLLRTCRA. Disordered stretches follow at residues 33–53 and 70–91; these read SVSSTPCPSPEAKSSEAQKDF and ASVPQEKPSSPEVEDPPPYLSG. One can recognise an MTTase N-terminal domain in the interval 99 to 219; that stretch reads RKVYLETYGC…LPRLLAVVES (121 aa). Positions 108, 144, 182, 257, 261, and 264 each coordinate [4Fe-4S] cluster. The 256-residue stretch at 243-498 folds into the Radical SAM core domain; that stretch reads SPSATSAFVS…TVFREEASKA (256 aa). The region spanning 500–575 is the TRAM domain; sequence KTSVGCSQLV…SQTLKGHILC (76 aa).

The protein belongs to the methylthiotransferase family. MiaB subfamily. As to quaternary structure, interacts with CDK5R1 (p35 form). CDK5RAP1, CDK5RAP2 and CDK5RAP3 show competitive binding to CDK5R1. Probably forms a complex with CDK5R1 and CDK5. [4Fe-4S] cluster serves as cofactor. In terms of tissue distribution, expressed in brain, liver, skeletal muscle and heart.

Its subcellular location is the mitochondrion. It catalyses the reaction N(6)-dimethylallyladenosine(37) in tRNA + (sulfur carrier)-SH + AH2 + 2 S-adenosyl-L-methionine = 2-methylsulfanyl-N(6)-dimethylallyladenosine(37) in tRNA + (sulfur carrier)-H + 5'-deoxyadenosine + L-methionine + A + S-adenosyl-L-homocysteine + 2 H(+). Functionally, methylthiotransferase that catalyzes the conversion of N6-(dimethylallyl)adenosine (i(6)A) to 2-methylthio-N6-(dimethylallyl)adenosine (ms(2)i(6)A) at position 37 (adjacent to the 3'-end of the anticodon) of four mitochondrial DNA-encoded tRNAs (Ser(UCN), Phe, Tyr and Trp). Essential for efficient and highly accurate protein translation by the ribosome. Specifically inhibits CDK5 activation by CDK5R1. Essential for efficient mitochondrial protein synthesis and respiratory chain. This is Mitochondrial tRNA methylthiotransferase CDK5RAP1 from Mus musculus (Mouse).